Consider the following 146-residue polypeptide: Ribosome maturation factor RimP (146 aa).

It belongs to the RimP family.

Its subcellular location is the cytoplasm. Functionally, required for maturation of 30S ribosomal subunits. This chain is Ribosome maturation factor RimP, found in Helicobacter pylori (strain ATCC 700392 / 26695) (Campylobacter pylori).